Reading from the N-terminus, the 567-residue chain is MNGIITPQKQKQLMSSPSRDPLSTTELSTPTSQTTVDVNDTKKSEGLDSTIILLTPGTSPNATPGSSELGLSKKPNSIKNNTYSTAAQAAYLNRRAADQSTVMTTDPISYANNNINNGTLPQQNAYYANSYYPSYYAQSQAISNNRPGVSGFRPAFNSVAPCYGSQWQTHQSVHPYHVNNTHQYLKPYVQNVYPQMPSLNQPGLHIVNQPTYLAPVPSATVPTNSVSLSMPSFSQGQKNIPAAINQEMSVGTTKENTNYLSQLVGLHPAIPPAIPSMFPMSHDNKKSNMESTSRTRNVYIRGLPPNTSDENLLLYTNRFGKVSSSKAIIDMETNLCKGYGFACFEEEKSALICISAMTLCGYQCSFAKESFSARLQSLQDTESTNLYISNLPLHWNESDISTLFKPSKIISNRVLRDSKEQSRGVGFARMQDRKTAEDIINKFNNFVLDPALPPLQIRFADSTDQKKFKGQTQKRRLWRAREYSVLTKGMTANNAFSKVEEFANNSMPSKVGMYVPLESNTVYQHSPTYDTYGWQSMYPSYSVYPSNYENSRSTTPYHAHPATSAAN.

Residues 1–18 (MNGIITPQKQKQLMSSPS) show a composition bias toward polar residues. Disordered regions lie at residues 1–39 (MNGI…VDVN) and 52–76 (ILLT…KKPN). The segment covering 21-35 (PLSTTELSTPTSQTT) has biased composition (low complexity). Positions 56 to 66 (PGTSPNATPGS) are enriched in polar residues. 2 RRM domains span residues 296–380 (RNVY…SLQD) and 384–462 (TNLY…FADS).

It localises to the cytoplasm. In terms of biological role, RNA-binding protein which plays a role in sporulation. Regulates the progression of meiosis I and may function in the vicinity of the Mei2 dot. In Schizosaccharomyces pombe (strain 972 / ATCC 24843) (Fission yeast), this protein is Sporulation-specific protein 5 (spo5).